A 276-amino-acid polypeptide reads, in one-letter code: Aliphatic sulfonates import ATP-binding protein SsuB 1 (276 aa).

The segment at 1–21 (MSTGNVTTLRRPEAPPSLPAG) is disordered. One can recognise an ABC transporter domain in the interval 39-259 (FSFRNVTKSF…RHGTPEFARL (221 aa)). 71 to 78 (GKSGCGKS) contributes to the ATP binding site.

It belongs to the ABC transporter superfamily. Aliphatic sulfonates importer (TC 3.A.1.17.2) family. The complex is composed of two ATP-binding proteins (SsuB), two transmembrane proteins (SsuC) and a solute-binding protein (SsuA).

Its subcellular location is the cell inner membrane. The enzyme catalyses ATP + H2O + aliphatic sulfonate-[sulfonate-binding protein]Side 1 = ADP + phosphate + aliphatic sulfonateSide 2 + [sulfonate-binding protein]Side 1.. Functionally, part of the ABC transporter complex SsuABC involved in aliphatic sulfonates import. Responsible for energy coupling to the transport system. This is Aliphatic sulfonates import ATP-binding protein SsuB 1 from Agrobacterium fabrum (strain C58 / ATCC 33970) (Agrobacterium tumefaciens (strain C58)).